The primary structure comprises 368 residues: Propane 2-monooxygenase, hydroxylase component small subunit (368 aa).

Positions 1 to 33 (MSAPAQPRERSFPSIEFTDAEADAREFPSSRSR) are disordered.

It belongs to the TmoE/XamoE family. In terms of assembly, the propane 2-monooxygenase multicomponent enzyme system is composed of an electron transfer component and a monooxygenase component interacting with the effector protein PrmD. The electron transfer component is composed of a reductase (PrmB), and the monooxygenase component is formed by a large subunit (PrmA) and a small subunit (PrmC). Probably requires the presence of the chaperonin-like protein PrmG to ensure a productive folding, resulting of a soluble PrmC, which leads to the active form of PrmABCD.

It carries out the reaction propane + NADH + O2 + H(+) = propan-2-ol + NAD(+) + H2O. The enzyme catalyses phenol + NADH + O2 + H(+) = hydroquinone + NAD(+) + H2O. Component of the propane 2-monooxygenase multicomponent enzyme system which is involved in the degradation of propane via the O2-dependent hydroxylation of propane. Under acetone induction, also able to catalyze the oxidation of phenol to yield hydroquinone. The protein is Propane 2-monooxygenase, hydroxylase component small subunit of Gordonia sp. (strain TY-5).